The following is a 711-amino-acid chain: DNA topoisomerase 3 (711 aa).

A Toprim domain is found at 2–135 (KSLILAEKPS…IKRLWISSVT (134 aa)). Positions 8 and 104 each coordinate Mg(2+). The region spanning 152-580 (FQHLYEAALA…EMKAFTQSIV (429 aa)) is the Topo IA-type catalytic domain. Positions 186–191 (SLGRVQ) are interaction with DNA. The O-(5'-phospho-DNA)-tyrosine intermediate role is filled by Tyr-305. Residues 672 to 699 (KRFKNKSSGKVSKKEMKKYMNNEDSLEN) are disordered. The segment covering 683–692 (SKKEMKKYMN) has biased composition (basic and acidic residues).

The protein belongs to the type IA topoisomerase family. The cofactor is Mg(2+).

It carries out the reaction ATP-independent breakage of single-stranded DNA, followed by passage and rejoining.. Its function is as follows. Releases the supercoiling and torsional tension of DNA, which is introduced during the DNA replication and transcription, by transiently cleaving and rejoining one strand of the DNA duplex. Introduces a single-strand break via transesterification at a target site in duplex DNA. The scissile phosphodiester is attacked by the catalytic tyrosine of the enzyme, resulting in the formation of a DNA-(5'-phosphotyrosyl)-enzyme intermediate and the expulsion of a 3'-OH DNA strand. The free DNA strand then undergoes passage around the unbroken strand, thus removing DNA supercoils. Finally, in the religation step, the DNA 3'-OH attacks the covalent intermediate to expel the active-site tyrosine and restore the DNA phosphodiester backbone. The polypeptide is DNA topoisomerase 3 (Staphylococcus haemolyticus (strain JCSC1435)).